Here is a 308-residue protein sequence, read N- to C-terminus: tRNA dimethylallyltransferase (308 aa).

An ATP-binding site is contributed by 14–21 (GPTASGKT). 16–21 (TASGKT) serves as a coordination point for substrate. Interaction with substrate tRNA stretches follow at residues 39–42 (DSAL), 163–167 (QRLAR), and 244–249 (RCVGYR).

The protein belongs to the IPP transferase family. As to quaternary structure, monomer. It depends on Mg(2+) as a cofactor.

It carries out the reaction adenosine(37) in tRNA + dimethylallyl diphosphate = N(6)-dimethylallyladenosine(37) in tRNA + diphosphate. Catalyzes the transfer of a dimethylallyl group onto the adenine at position 37 in tRNAs that read codons beginning with uridine, leading to the formation of N6-(dimethylallyl)adenosine (i(6)A). The protein is tRNA dimethylallyltransferase of Shewanella halifaxensis (strain HAW-EB4).